Here is a 256-residue protein sequence, read N- to C-terminus: uncharacterized protein (256 aa).

This sequence belongs to the glycosyltransferase 2 family.

This is an uncharacterized protein from Acanthamoeba polyphaga mimivirus (APMV).